Here is a 48-residue protein sequence, read N- to C-terminus: Bacteriocin plantaricin-A (48 aa).

A propeptide spanning residues Met-1–Ser-25 is cleaved from the precursor.

As to quaternary structure, active plantaricin A is composed of an alpha chain and a beta chain.

Functionally, this heat stable bacteriocin inhibits the growth of closely related Lactobacillus species. It may act as a pore-forming protein, creating a channel in the cell membrane through a 'barrel stave' mechanism. The sequence is that of Bacteriocin plantaricin-A (plnA) from Lactiplantibacillus plantarum (strain ATCC BAA-793 / NCIMB 8826 / WCFS1) (Lactobacillus plantarum).